We begin with the raw amino-acid sequence, 473 residues long: Adenosylhomocysteinase (473 aa).

Residues 58-62, Asp135, and Glu197 each bind substrate; that span reads HMTIQ. 198 to 200 is a binding site for NAD(+); sequence TTT. Substrate contacts are provided by Lys227 and Asp231. NAD(+)-binding positions include Asn232, Val265, Glu284, Asn319, 340–342, and Asn385; that span reads IGH. His342 serves as a coordination point for substrate. His392 is a binding site for substrate. NAD(+) is bound by residues Lys467 and Tyr471.

It belongs to the adenosylhomocysteinase family. Homotetramer; dimer of dimers. Requires NAD(+) as cofactor.

Its subcellular location is the cytoplasm. The enzyme catalyses S-adenosyl-L-homocysteine + H2O = L-homocysteine + adenosine. Its pathway is amino-acid biosynthesis; L-homocysteine biosynthesis; L-homocysteine from S-adenosyl-L-homocysteine: step 1/1. In terms of biological role, may play a key role in the regulation of the intracellular concentration of adenosylhomocysteine, which is a strong inhibitor of SAM-dependent methyltransferases. Catalyzes the hydrolysis of S-adenosyl-L-homocysteine into L-homocysteine and adenosine. This chain is Adenosylhomocysteinase, found in Bradyrhizobium elkanii.